A 611-amino-acid chain; its full sequence is Protein KINASE OF THE OUTER CHLOROPLAST MEMBRANE 1 (611 aa).

Over 1–555 (MASKIIAGKP…LEDFHWAVRP (555 aa)) the chain is Cytoplasmic. Residues 39-306 (LKLRHRIGRG…TDILLVLKSL (268 aa)) form the Protein kinase domain. ATP is bound by residues 45-53 (IGRGPFGDV) and Lys74. Residues 556 to 572 (LLIAMGLLTAMKLGICV) form a helical membrane-spanning segment. Residues 573–611 (RKKIGRSKDGKQRDGSTGQGDCKIPDGKGSDKSKWLVFF) are Chloroplast intermembrane-facing. The segment at 579–606 (SKDGKQRDGSTGQGDCKIPDGKGSDKSK) is disordered. The segment covering 595-606 (KIPDGKGSDKSK) has biased composition (basic and acidic residues).

Belongs to the protein kinase superfamily. Ser/Thr protein kinase family. In terms of assembly, associates with the TOC complex containing, at least, translocons at the chloroplast envelope (e.g. TOCs and TICs such as TOC159, TOC75, TOC33 and TIC56).

The protein resides in the plastid. Its subcellular location is the chloroplast outer membrane. The enzyme catalyses L-seryl-[protein] + ATP = O-phospho-L-seryl-[protein] + ADP + H(+). The catalysed reaction is L-threonyl-[protein] + ATP = O-phospho-L-threonyl-[protein] + ADP + H(+). Its function is as follows. Serine/threonine protein kinase acting as a regulatory component of the plastid protein import machinery by phosphorylating import receptors (e.g. the A-domain of TOC159, TOC120 and TOC132). Supports preprotein import and contributes to efficient chloroplast biogenesis, thus being required for survival during de-etiolation. The chain is Protein KINASE OF THE OUTER CHLOROPLAST MEMBRANE 1 from Arabidopsis thaliana (Mouse-ear cress).